The chain runs to 292 residues: 4-diphosphocytidyl-2-C-methyl-D-erythritol kinase (292 aa).

The active site involves lysine 20. 103–113 (PMGGGIGGGSS) is a binding site for ATP. Aspartate 145 is a catalytic residue.

This sequence belongs to the GHMP kinase family. IspE subfamily.

It carries out the reaction 4-CDP-2-C-methyl-D-erythritol + ATP = 4-CDP-2-C-methyl-D-erythritol 2-phosphate + ADP + H(+). It functions in the pathway isoprenoid biosynthesis; isopentenyl diphosphate biosynthesis via DXP pathway; isopentenyl diphosphate from 1-deoxy-D-xylulose 5-phosphate: step 3/6. In terms of biological role, catalyzes the phosphorylation of the position 2 hydroxy group of 4-diphosphocytidyl-2C-methyl-D-erythritol. The protein is 4-diphosphocytidyl-2-C-methyl-D-erythritol kinase of Cupriavidus metallidurans (strain ATCC 43123 / DSM 2839 / NBRC 102507 / CH34) (Ralstonia metallidurans).